A 198-amino-acid chain; its full sequence is MYFGKTRQSDQSGRVPPNQNVTTSFPVLHTGDVPYYEDMTKWNLQVYGLVDHPMLLSFEDVKAFPRYESKNDIHCVTGWSRLDNVWQGVRACDIAEKAGVKEEAGYVILHAEEGWTTNLPLDDFLAETSLLAYAHNGEPLTPEHGFPLRGVFPHLYFWKSAKWLRGIQFTKENHPGFWERNGYHMRGDPWQNQRFTWD.

The tract at residues 1-23 (MYFGKTRQSDQSGRVPPNQNVTT) is disordered. The segment covering 9–23 (SDQSGRVPPNQNVTT) has biased composition (polar residues). Residues Cys75, His144, and Arg149 each coordinate Mo-molybdopterin.

Mo-molybdopterin serves as cofactor.

This is an uncharacterized protein from Bacillus subtilis (strain 168).